A 102-amino-acid polypeptide reads, in one-letter code: UPF0213 protein in potE 3'region (102 aa).

The GIY-YIG domain occupies 6-81 (SPWHLYMLRL…KQLSKTQKER (76 aa)).

Belongs to the UPF0213 family.

This is UPF0213 protein in potE 3'region from Serratia liquefaciens.